Reading from the N-terminus, the 463-residue chain is Ribulose bisphosphate carboxylase (463 aa).

Asn-116 lines the substrate pocket. The active-site Proton acceptor is the Lys-171. Lys-173 is a substrate binding site. Mg(2+) is bound by residues Lys-196, Asp-198, and Glu-199. Lys-196 bears the N6-carboxylysine mark. His-294 functions as the Proton acceptor in the catalytic mechanism. The substrate site is built by Arg-295, His-328, and Ser-375.

This sequence belongs to the RuBisCO large chain family. Type II subfamily. Homodimer. The cofactor is Mg(2+).

The enzyme catalyses 2 (2R)-3-phosphoglycerate + 2 H(+) = D-ribulose 1,5-bisphosphate + CO2 + H2O. The catalysed reaction is D-ribulose 1,5-bisphosphate + O2 = 2-phosphoglycolate + (2R)-3-phosphoglycerate + 2 H(+). In terms of biological role, ruBisCO catalyzes two reactions: the carboxylation of D-ribulose 1,5-bisphosphate, the primary event in carbon dioxide fixation, as well as the oxidative fragmentation of the pentose substrate. Both reactions occur simultaneously and in competition at the same active site. This chain is Ribulose bisphosphate carboxylase, found in Hydrogenovibrio marinus.